The primary structure comprises 729 residues: Polyribonucleotide nucleotidyltransferase (729 aa).

Mg(2+)-binding residues include Asp-516 and Asp-522. In terms of domain architecture, KH spans Pro-581–Ile-641. The S1 motif domain maps to Gly-658–Pro-725.

This sequence belongs to the polyribonucleotide nucleotidyltransferase family. Requires Mg(2+) as cofactor.

It is found in the cytoplasm. It catalyses the reaction RNA(n+1) + phosphate = RNA(n) + a ribonucleoside 5'-diphosphate. Involved in mRNA degradation. Catalyzes the phosphorolysis of single-stranded polyribonucleotides processively in the 3'- to 5'-direction. The chain is Polyribonucleotide nucleotidyltransferase from Sulfurovum sp. (strain NBC37-1).